The sequence spans 497 residues: Ectonucleoside triphosphate diphosphohydrolase 8 (497 aa).

The Cytoplasmic portion of the chain corresponds to 1-8 (MGLSWKER). Residues 9-29 (VFMALLGVAAASGLTMLVLIL) traverse the membrane as a helical segment. Residues 30–473 (VKAINVLLPA…AQSYSIWTAG (444 aa)) lie on the Extracellular side of the membrane. Cys-78 and Cys-102 are joined by a disulfide. Catalysis depends on Glu-168, which acts as the Proton acceptor. A disulfide bridge links Cys-245 with Cys-294. Asn-306 carries an N-linked (GlcNAc...) asparagine glycan. Cys-331 and Cys-337 are oxidised to a cystine. Residue Asn-365 is glycosylated (N-linked (GlcNAc...) asparagine). A disulfide bond links Cys-383 and Cys-405. A helical transmembrane segment spans residues 474 to 494 (VVFAVLTLVAILGAAAIQIFW). At 495–497 (TQD) the chain is on the cytoplasmic side.

It belongs to the GDA1/CD39 NTPase family. The cofactor is Ca(2+). Mg(2+) serves as cofactor. N-glycosylated. Expressed in liver, jejunum and kidney.

It localises to the cell membrane. It catalyses the reaction a ribonucleoside 5'-triphosphate + 2 H2O = a ribonucleoside 5'-phosphate + 2 phosphate + 2 H(+). Functionally, canalicular ectonucleoside NTPDase responsible for the main hepatic NTPDase activity. Ectonucleoside NTPDases catalyze the hydrolysis of gamma- and beta-phosphate residues of nucleotides, playing a central role in concentration of extracellular nucleotides. Has activity toward ATP, ADP, UTP and UDP, but not toward AMP. The chain is Ectonucleoside triphosphate diphosphohydrolase 8 (Entpd8) from Mus musculus (Mouse).